The primary structure comprises 469 residues: Serine/threonine-protein kinase orb6 (469 aa).

In terms of domain architecture, Protein kinase spans 93 to 392; the sequence is FSTIKVIGKG…AIEIMQHPFF (300 aa). Residues 99 to 107 and Lys122 contribute to the ATP site; that span reads IGKGAFGEV. Asp216 (proton acceptor) is an active-site residue. Positions 393-467 constitute an AGC-kinase C-terminal domain; the sequence is TGIDWDHIRE…KKFNYLTMKG (75 aa).

It belongs to the protein kinase superfamily. Ser/Thr protein kinase family. Interacts with mob2.

The catalysed reaction is L-seryl-[protein] + ATP = O-phospho-L-seryl-[protein] + ADP + H(+). The enzyme catalyses L-threonyl-[protein] + ATP = O-phospho-L-threonyl-[protein] + ADP + H(+). Interacts with pak1/shk1 and coordinates cell morphogenesis with the cell cycle. It is essential for maintenance of cell polarity and is involved in mitotic control. The polypeptide is Serine/threonine-protein kinase orb6 (orb6) (Schizosaccharomyces pombe (strain 972 / ATCC 24843) (Fission yeast)).